The primary structure comprises 524 residues: AAA ATPase forming ring-shaped complexes (524 aa).

The tract at residues 1–29 (MGMGQEKHTDAASQSRDPEAVAAHENDQL) is disordered. A coiled-coil region spans residues 22-59 (AAHENDQLRQRNHALAKALTRATEELRKAKAQLEQFMA). Residue 250-255 (GNGKTL) coordinates ATP.

It belongs to the AAA ATPase family. Homohexamer. Assembles into a hexameric ring structure.

This Bifidobacterium animalis subsp. lactis (strain BB-12) protein is AAA ATPase forming ring-shaped complexes.